We begin with the raw amino-acid sequence, 292 residues long: Glycine--tRNA ligase alpha subunit (292 aa).

This sequence belongs to the class-II aminoacyl-tRNA synthetase family. In terms of assembly, tetramer of two alpha and two beta subunits.

It is found in the cytoplasm. The catalysed reaction is tRNA(Gly) + glycine + ATP = glycyl-tRNA(Gly) + AMP + diphosphate. This Pelobacter propionicus (strain DSM 2379 / NBRC 103807 / OttBd1) protein is Glycine--tRNA ligase alpha subunit.